Here is a 193-residue protein sequence, read N- to C-terminus: MSKISLIVGLGNPGAEYAQTRHNAGFWFVEQLADRYNITLKKDPKFHGFSGRGQIEGHDVRLLIPTTFMNRSGQSVVPFSKFYQISPEAILIAHDELDMDPGVIRLKTGGGHGGHNGLRDIVPHIGANFHRLRIGIGHPGSKDRVSGHVLGKAPQNEQTLMEDAIHHALSNTRLLVDGQIAQAMNQINAYKPK.

Tyrosine 17 lines the tRNA pocket. The active-site Proton acceptor is histidine 22. Positions 68, 70, and 116 each coordinate tRNA.

Belongs to the PTH family. As to quaternary structure, monomer.

The protein localises to the cytoplasm. The catalysed reaction is an N-acyl-L-alpha-aminoacyl-tRNA + H2O = an N-acyl-L-amino acid + a tRNA + H(+). In terms of biological role, hydrolyzes ribosome-free peptidyl-tRNAs (with 1 or more amino acids incorporated), which drop off the ribosome during protein synthesis, or as a result of ribosome stalling. Catalyzes the release of premature peptidyl moieties from peptidyl-tRNA molecules trapped in stalled 50S ribosomal subunits, and thus maintains levels of free tRNAs and 50S ribosomes. The protein is Peptidyl-tRNA hydrolase of Acinetobacter baylyi (strain ATCC 33305 / BD413 / ADP1).